We begin with the raw amino-acid sequence, 558 residues long: Ankyrin repeat protein OPG189 (558 aa).

ANK repeat units lie at residues Y65–K95, Y169–K205, H209–S239, N243–T272, F276–I304, Y339–T368, and S372–I401.

Belongs to the orthopoxvirus OPG189 protein family.

In terms of biological role, contributes to viral release without involving rearrangement of host actin. The protein is Ankyrin repeat protein OPG189 (OPG189) of Homo sapiens (Human).